The chain runs to 810 residues: Lon protease (810 aa).

The Lon N-terminal domain occupies 40-233; sequence LIIVPVRGFV…MVAKLLAQRI (194 aa). 385 to 392 lines the ATP pocket; it reads GPPGVGKT. The 182-residue stretch at 621-802 folds into the Lon proteolytic domain; sequence LSVPGVATGL…DDAMAAAFEG (182 aa). Active-site residues include S708 and K751.

Belongs to the peptidase S16 family. In terms of assembly, homohexamer. Organized in a ring with a central cavity.

The protein localises to the cytoplasm. It catalyses the reaction Hydrolysis of proteins in presence of ATP.. Its function is as follows. ATP-dependent serine protease that mediates the selective degradation of mutant and abnormal proteins as well as certain short-lived regulatory proteins. Required for cellular homeostasis and for survival from DNA damage and developmental changes induced by stress. Degrades polypeptides processively to yield small peptide fragments that are 5 to 10 amino acids long. Binds to DNA in a double-stranded, site-specific manner. The polypeptide is Lon protease (Methylocella silvestris (strain DSM 15510 / CIP 108128 / LMG 27833 / NCIMB 13906 / BL2)).